We begin with the raw amino-acid sequence, 461 residues long: Nuclear distribution protein PAC1 (461 aa).

The region spanning 9 to 41 (QAEELHKSIIAYLTANNLLNTANTLRAELNLSE) is the LisH domain. 7 WD repeats span residues 114–155 (SHRD…RTIK), 157–197 (HTRA…KNIR), 201–248 (GHDH…CVRT), 251–290 (GHTAWVRDVYPSPDGRFLLSTGDDSTARLWDISVSNPESK), 312–355 (QYLS…LMTL), 357–396 (GHDNWIRALAFHPGGKYLFSVSDDRTLRCWDLSQEGKCIK), and 401–457 (AHER…MKLR).

This sequence belongs to the WD repeat LIS1/nudF family. Self-associates. Interacts with NDL1 and dynein.

Its subcellular location is the cytoplasm. The protein localises to the cytoskeleton. It localises to the spindle pole. Its function is as follows. Positively regulates the activity of the minus-end directed microtubule motor protein dynein. May enhance dynein-mediated microtubule sliding by targeting dynein to the microtubule plus end. Required for nuclear migration during vegetative growth as well as development. Required for retrograde early endosome (EE) transport from the hyphal tip. Required for localization of dynein to the mitotic spindle poles. Recruits additional proteins to the dynein complex at SPBs. The polypeptide is Nuclear distribution protein PAC1 (Arthroderma otae (strain ATCC MYA-4605 / CBS 113480) (Microsporum canis)).